A 99-amino-acid polypeptide reads, in one-letter code: Malonate decarboxylase acyl carrier protein (99 aa).

The residue at position 25 (Ser-25) is an O-(phosphoribosyl dephospho-coenzyme A)serine.

This sequence belongs to the MdcC family. In terms of processing, covalently binds the prosthetic group of malonate decarboxylase.

It is found in the cytoplasm. Subunit of malonate decarboxylase, it is an acyl carrier protein to which acetyl and malonyl thioester residues are bound via a 2'-(5''-phosphoribosyl)-3'-dephospho-CoA prosthetic group and turn over during the catalytic mechanism. In Pseudomonas savastanoi pv. phaseolicola (strain 1448A / Race 6) (Pseudomonas syringae pv. phaseolicola (strain 1448A / Race 6)), this protein is Malonate decarboxylase acyl carrier protein.